We begin with the raw amino-acid sequence, 263 residues long: Regulatory protein RecX (263 aa).

This sequence belongs to the RecX family.

The protein localises to the cytoplasm. Functionally, modulates RecA activity. This chain is Regulatory protein RecX, found in Bacillus velezensis (strain DSM 23117 / BGSC 10A6 / LMG 26770 / FZB42) (Bacillus amyloliquefaciens subsp. plantarum).